A 267-amino-acid polypeptide reads, in one-letter code: GTP cyclohydrolase FolE2 (267 aa).

It belongs to the GTP cyclohydrolase IV family.

It catalyses the reaction GTP + H2O = 7,8-dihydroneopterin 3'-triphosphate + formate + H(+). Its pathway is cofactor biosynthesis; 7,8-dihydroneopterin triphosphate biosynthesis; 7,8-dihydroneopterin triphosphate from GTP: step 1/1. In terms of biological role, converts GTP to 7,8-dihydroneopterin triphosphate. This Nitrosomonas eutropha (strain DSM 101675 / C91 / Nm57) protein is GTP cyclohydrolase FolE2.